Reading from the N-terminus, the 156-residue chain is Cell division protein SepF (156 aa).

It belongs to the SepF family. Homodimer. Interacts with FtsZ.

It localises to the cytoplasm. In terms of biological role, cell division protein that is part of the divisome complex and is recruited early to the Z-ring. Probably stimulates Z-ring formation, perhaps through the cross-linking of FtsZ protofilaments. Its function overlaps with FtsA. The sequence is that of Cell division protein SepF from Bacillus cytotoxicus (strain DSM 22905 / CIP 110041 / 391-98 / NVH 391-98).